The primary structure comprises 122 residues: Early nodulin-10 (122 aa).

Residues 1–36 (MTCTLKSPPKMASFFLSSLVLMFIAALILLPQGLAA) form the signal peptide. Tandem repeats lie at residues 45–49 (PPDSE), 51–55 (PPYRN), 58–62 (PPFAL), 68–72 (APIYK), 77–81 (PPIYN), 82–86 (PPIYE), 88–92 (PPTYK), 99–103 (PPPFQ), 106–110 (PPFYK), and 113–117 (PPSQK). The interval 45-117 (PPDSELPPYR…FYKQAPPSQK (73 aa)) is 10 X 5 AA approximate repeats of P-P-X-X-X. Residues 90-122 (TYKPSKKRLPPPFQKLPPFYKQAPPSQKLPRVN) are disordered.

Root nodules. In early nodules, expressed only in the interior of the developing nodule with no expression in other nodule tissues, including meristem. In slightly older nodules, expressed in almost all cells of the central zone. In more mature nodules, expression is restricted to the invasion zone.

The sequence is that of Early nodulin-10 (ENOD10) from Medicago sativa (Alfalfa).